The chain runs to 472 residues: Cysteine--tRNA ligase (472 aa).

Position 28 (Cys28) interacts with Zn(2+). A 'HIGH' region motif is present at residues Pro30 to Asn40. Zn(2+)-binding residues include Cys212, His237, and Glu241. A 'KMSKS' region motif is present at residues Lys271 to Ser275. Lys274 contributes to the ATP binding site.

It belongs to the class-I aminoacyl-tRNA synthetase family. Monomer. Requires Zn(2+) as cofactor.

The protein resides in the cytoplasm. It catalyses the reaction tRNA(Cys) + L-cysteine + ATP = L-cysteinyl-tRNA(Cys) + AMP + diphosphate. This Limosilactobacillus fermentum (strain NBRC 3956 / LMG 18251) (Lactobacillus fermentum) protein is Cysteine--tRNA ligase.